The chain runs to 382 residues: Protein-arginine rhamnosyltransferase (382 aa).

18–19 provides a ligand contact to dTDP; that stretch reads FG. Aspartate 20 serves as the catalytic Proton acceptor. DTDP-beta-L-rhamnose contacts are provided by residues aspartate 20, tyrosine 187, 250 to 252, and 268 to 272; these read VPQ and RGEDS. DTDP contacts are provided by residues tyrosine 187, 250–252, and 268–272; these read VPQ and RGEDS. Glutamate 270 is a catalytic residue.

It belongs to the glycosyltransferase 104 family.

It carries out the reaction dTDP-beta-L-rhamnose + L-arginyl-[protein] = N(omega)-(alpha-L-rhamnosyl)-L-arginyl-[protein] + dTDP + H(+). Its function is as follows. Protein-arginine rhamnosyltransferase that catalyzes the transfer of a single rhamnose to elongation factor P (EF-P) on 'Lys-32', a modification required for EF-P-dependent rescue of polyproline stalled ribosomes. The protein is Protein-arginine rhamnosyltransferase of Neisseria meningitidis serogroup B / serotype 15 (strain H44/76).